A 471-amino-acid chain; its full sequence is Secretogranin-3 (471 aa).

The first 22 residues, 1-22 (MGFLWTGSWILVLVLNSGPIQA), serve as a signal peptide directing secretion. 4 disordered regions span residues 24–73 (PKPE…SNFS), 92–145 (KAKQ…HQLD), 208–231 (ANNY…KIPE), and 345–405 (KLEK…DEAK). A compositionally biased stretch (basic and acidic residues) spans 28–45 (GSQDKSLHNRELSAERPL). Ser-40 bears the Phosphoserine mark. Ser-40 carries an O-linked (Xyl...) (chondroitin sulfate) serine glycan. Low complexity predominate over residues 62 to 73 (PSESKPSESNFS). 4 stretches are compositionally biased toward basic and acidic residues: residues 106–142 (LNVD…DGLH), 214–231 (APEK…KIPE), 345–355 (KLEKNTTDSKS), and 363–405 (EKSH…DEAK). Ser-365 is modified (phosphoserine).

As to quaternary structure, interacts with CHGA. Interacts with secretogranin II/SCG2. Interacts (via C-terminus) with CPE. Expression restricted to the brain and pituitary gland. Not detected in the adrenal gland.

The protein resides in the cytoplasmic vesicle. It localises to the secretory vesicle. Its subcellular location is the secretory vesicle membrane. The protein localises to the secreted. Functionally, member of the granin protein family that regulates the biogenesis of secretory granules. Acts as a sorting receptor for intragranular proteins including chromogranin A/CHGA. May also play a role in angiogenesis. Promotes endothelial proliferation, migration and tube formation through MEK/ERK signaling pathway. This chain is Secretogranin-3 (Scg3), found in Rattus norvegicus (Rat).